Reading from the N-terminus, the 551-residue chain is Membrane protein insertase YidC (551 aa).

Residues alanine 3 to glycine 23 traverse the membrane as a helical segment. Residues asparagine 33 to tyrosine 47 show a composition bias toward polar residues. The segment at asparagine 33–valine 58 is disordered. Helical transmembrane passes span leucine 361–tyrosine 381, leucine 431–leucine 451, and valine 504–valine 524.

It belongs to the OXA1/ALB3/YidC family. Type 1 subfamily. As to quaternary structure, interacts with the Sec translocase complex via SecD. Specifically interacts with transmembrane segments of nascent integral membrane proteins during membrane integration.

The protein localises to the cell inner membrane. In terms of biological role, required for the insertion and/or proper folding and/or complex formation of integral membrane proteins into the membrane. Involved in integration of membrane proteins that insert both dependently and independently of the Sec translocase complex, as well as at least some lipoproteins. Aids folding of multispanning membrane proteins. This Francisella tularensis subsp. novicida (strain U112) protein is Membrane protein insertase YidC.